The following is a 304-amino-acid chain: MNRLAVEIPGLSLKNPIMPASGCFGFGQEYSKYYDLNELGAIMAKAVTPEPRLGNPTPRVAETASGMLNAIGLQNPGLEHVLAHELPFLEQFETPIIANVAGATEDDYVQVCARIGESKAVKAIELNISCPNVKHGGIAFGTDPDVAHRLTKAVKNVATVPVYVKLSPNVADIVSIAQAIEAAGADGLTMINTLLGMRIDLKTRKPIIANGTGGLSGPAIKPVAIRMIHQVREVSNIPIIGMGGVQTVDDVLEFLIAGADAVAVGTMNFTDPFICPKLISELPKRMDELGISSLQELKKERANQ.

FMN is bound by residues serine 21 and 45 to 46; that span reads KA. Substrate is bound by residues lysine 45 and 69–73; that span reads NAIGL. Residues asparagine 99 and asparagine 127 each contribute to the FMN site. Asparagine 127 serves as a coordination point for substrate. Residue cysteine 130 is the Nucleophile of the active site. Residues lysine 165 and isoleucine 191 each contribute to the FMN site. 192-193 serves as a coordination point for substrate; the sequence is NT. Residues glycine 217, 243 to 244, and 265 to 266 each bind FMN; these read GG and GT.

Belongs to the dihydroorotate dehydrogenase family. Type 1 subfamily. As to quaternary structure, heterotetramer of 2 PyrK and 2 PyrD type B subunits. The cofactor is FMN.

It localises to the cytoplasm. It catalyses the reaction (S)-dihydroorotate + NAD(+) = orotate + NADH + H(+). It participates in pyrimidine metabolism; UMP biosynthesis via de novo pathway; orotate from (S)-dihydroorotate (NAD(+) route): step 1/1. Catalyzes the conversion of dihydroorotate to orotate with NAD(+) as electron acceptor. The chain is Dihydroorotate dehydrogenase B (NAD(+)), catalytic subunit (pyrD) from Listeria monocytogenes serotype 4b (strain F2365).